The primary structure comprises 217 residues: 3-dehydroquinate dehydratase (217 aa).

3-dehydroquinate is bound by residues 26 to 28 (EFR) and Arg59. His114 (proton donor/acceptor) is an active-site residue. Lys140 (schiff-base intermediate with substrate) is an active-site residue. 2 residues coordinate 3-dehydroquinate: Arg178 and Gln201.

The protein belongs to the type-I 3-dehydroquinase family. As to quaternary structure, homodimer.

The catalysed reaction is 3-dehydroquinate = 3-dehydroshikimate + H2O. The protein operates within metabolic intermediate biosynthesis; chorismate biosynthesis; chorismate from D-erythrose 4-phosphate and phosphoenolpyruvate: step 3/7. Involved in the third step of the chorismate pathway, which leads to the biosynthesis of aromatic amino acids. Catalyzes the cis-dehydration of 3-dehydroquinate (DHQ) and introduces the first double bond of the aromatic ring to yield 3-dehydroshikimate. The sequence is that of 3-dehydroquinate dehydratase from Hydrogenobaculum sp. (strain Y04AAS1).